A 178-amino-acid chain; its full sequence is Large ribosomal subunit protein eL20 (178 aa).

It belongs to the eukaryotic ribosomal protein eL20 family.

The polypeptide is Large ribosomal subunit protein eL20 (RPL18A) (Oryza sativa subsp. japonica (Rice)).